Here is a 146-residue protein sequence, read N- to C-terminus: Ferredoxin-thioredoxin reductase catalytic chain, chloroplastic (146 aa).

The transit peptide at 1 to 26 (MMSMASTTASPFCPSPMPRGRKCTVR) directs the protein to the chloroplast. Residue cysteine 85 participates in [4Fe-4S] cluster binding. The active-site Nucleophile is cysteine 87. Cysteine 87 and cysteine 117 are disulfide-bonded. [4Fe-4S] cluster-binding residues include cysteine 104, cysteine 106, and cysteine 115.

The protein belongs to the ferredoxin thioredoxin reductase beta subunit family. In terms of assembly, heterodimer of subunit A (variable subunit) and subunit B (catalytic subunit). Heterodimeric FTR forms a complex with ferredoxin and thioredoxin. The cofactor is [4Fe-4S] cluster.

It is found in the plastid. It localises to the chloroplast. The enzyme catalyses [thioredoxin]-disulfide + 2 reduced [2Fe-2S]-[ferredoxin] + 2 H(+) = [thioredoxin]-dithiol + 2 oxidized [2Fe-2S]-[ferredoxin]. Functionally, catalytic subunit of the ferredoxin-thioredoxin reductase (FTR), which catalyzes the two-electron reduction of thioredoxins by the electrons provided by reduced ferredoxin. The chain is Ferredoxin-thioredoxin reductase catalytic chain, chloroplastic from Oryza sativa subsp. japonica (Rice).